The following is a 507-amino-acid chain: MGADDGAISADKVDIRLQPLNKNGAQDETDEEAADQIQLRVYKQRWIVLLAVALLNNTNTMSWIGYAPSGNYVNSFYGESSAAWLSMVYMMCTIPVGMFAMWAGREWGLRTAVLIAGWANGIGAVIRVISSLDFVPQDLRFPICMTGQGIAAIAYPFIMFLPTKVAGSWFPDTQRAIATSIGVMSNPLGVLMANLISPAIVKSPEHVIWLNIFTCVPSLIAMLIATFGVNRSEPKIPPTFSASKPQMDFVSGMKSCFSSKQYIILLIVMGGGIGMFNCLYTVMLELLCPSGYSNFFSGVCAALMIVGGVFGAAASSIFVDRTKLYEETLKIALGAAVIFGLIFLQLTLHQGYSVILGVTCLLFGVLGLATYPIGLELASECTFPVSEATSTGLIVLSGQIQSVIYVFIMKNFARPLQPDRMHIQVCQLTPDDTINTPKDNTMSIMIFSLLATLLVLTLVVLFKPVYKRLEAERGNRATADKAKELSNQNKDRITLQAESAVEPLQKK.

Transmembrane regions (helical) follow at residues 46–66, 83–103, 112–132, 141–161, 181–201, 207–227, 263–283, 299–319, 328–348, 354–374, 389–409, and 442–462; these read WIVL…WIGY, AWLS…AMWA, AVLI…ISSL, FPIC…IMFL, IGVM…PAIV, VIWL…IATF, IILL…YTVM, VCAA…SIFV, TLKI…QLTL, VILG…YPIG, TSTG…VFIM, and MSIM…VVLF. Over residues 477 to 493 the composition is skewed to basic and acidic residues; sequence ATADKAKELSNQNKDRI. Residues 477-507 are disordered; that stretch reads ATADKAKELSNQNKDRITLQAESAVEPLQKK.

It localises to the membrane. This is an uncharacterized protein from Caenorhabditis elegans.